Reading from the N-terminus, the 137-residue chain is Small ribosomal subunit protein uS9 (137 aa).

The tract at residues 118-137 is disordered; it reads KERKKYGLRKARKAPQYSKR.

The protein belongs to the universal ribosomal protein uS9 family.

The protein is Small ribosomal subunit protein uS9 of Acaryochloris marina (strain MBIC 11017).